The chain runs to 280 residues: Thymidylate synthase (280 aa).

Arg-21 contacts dUMP. His-51 is a binding site for (6R)-5,10-methylene-5,6,7,8-tetrahydrofolate. 142–143 (RR) contacts dUMP. Cys-162 (nucleophile) is an active-site residue. Residues 182–185 (RSAD), Asn-193, and 223–225 (HLY) contribute to the dUMP site. Asp-185 serves as a coordination point for (6R)-5,10-methylene-5,6,7,8-tetrahydrofolate. Position 279 (Ala-279) interacts with (6R)-5,10-methylene-5,6,7,8-tetrahydrofolate.

It belongs to the thymidylate synthase family. Bacterial-type ThyA subfamily. In terms of assembly, homodimer.

The protein localises to the cytoplasm. It carries out the reaction dUMP + (6R)-5,10-methylene-5,6,7,8-tetrahydrofolate = 7,8-dihydrofolate + dTMP. The protein operates within pyrimidine metabolism; dTTP biosynthesis. Catalyzes the reductive methylation of 2'-deoxyuridine-5'-monophosphate (dUMP) to 2'-deoxythymidine-5'-monophosphate (dTMP) while utilizing 5,10-methylenetetrahydrofolate (mTHF) as the methyl donor and reductant in the reaction, yielding dihydrofolate (DHF) as a by-product. This enzymatic reaction provides an intracellular de novo source of dTMP, an essential precursor for DNA biosynthesis. This is Thymidylate synthase from Acinetobacter baylyi (strain ATCC 33305 / BD413 / ADP1).